Here is a 536-residue protein sequence, read N- to C-terminus: Signal peptide peptidase-like 5 (536 aa).

A signal peptide spans 1-29; the sequence is MSLPPFTCRLLAAAAALYLIGLLCVGADT. Topologically, residues 30–186 are lumenal; the sequence is KDVTAPKIPG…VELLLYAPKS (157 aa). A PA domain is found at 94–170; the sequence is SNLTSKLSWS…TSSGDALKKS (77 aa). N-linked (GlcNAc...) asparagine glycans are attached at residues N95 and N151. A helical transmembrane segment spans residues 187-207; the sequence is PIVDYAVVFLWLMSVGTVFVA. Residues 208–243 are Cytoplasmic-facing; the sequence is SVWSHVTSPKKNDEQYDELSPKKSSNVDATKGGAEE. Positions 218-238 are disordered; the sequence is KNDEQYDELSPKKSSNVDATK. The helical transmembrane segment at 244-264 threads the bilayer; that stretch reads ETLDISAMGAVIFVISASTFL. Over 265–273 the chain is Lumenal; the sequence is VLLFFFMSS. Residues 274–296 traverse the membrane as a helical segment; the sequence is WFILILTIFFVIGGMQGMHNINV. At 297–318 the chain is on the cytoplasmic side; that stretch reads TLITRRCSKCGQKNLKLPLLGN. Residues 319–339 traverse the membrane as a helical segment; it reads TSILSLVVLLFCFVVAILWFM. Topologically, residues 340 to 344 are lumenal; the sequence is NRKTS. Residues 345–365 form a helical membrane-spanning segment; it reads HAWAGQDIFGICMMINVLQVA. Residues 366-374 lie on the Cytoplasmic side of the membrane; sequence RLPNIRVAT. The helical transmembrane segment at 375–395 threads the bilayer; the sequence is ILLCCAFFYDIFWVFISPLIF. Residue D384 is part of the active site. Residues 396 to 428 are Lumenal-facing; the sequence is KQSVMIAVARGSKDTGESIPMLLRIPRLSDPWG. The helical transmembrane segment at 429–449 threads the bilayer; the sequence is GYNMIGFGDILFPGLLICFIF. Residue D437 is part of the active site. At 450–463 the chain is on the cytoplasmic side; the sequence is RFDKENNKGVSNGY. A helical transmembrane segment spans residues 464 to 484; the sequence is FPWLMFGYGLGLFLTYLGLYV. At 485–489 the chain is on the lumenal side; sequence MNGHG. A helical membrane pass occupies residues 490–510; it reads QPALLYLVPCTLGITVILGLV. Positions 491–493 match the PAL motif; it reads PAL. Residues 511–536 lie on the Cytoplasmic side of the membrane; sequence RKELRDLWNYGTQQPSAADVNPSPEA.

This sequence belongs to the peptidase A22B family. Post-translationally, glycosylated.

The protein localises to the endosome membrane. Intramembrane-cleaving aspartic protease (I-CLiP) that cleaves type II membrane signal peptides in the hydrophobic plane of the membrane. This is Signal peptide peptidase-like 5 (SPPL5) from Arabidopsis thaliana (Mouse-ear cress).